Here is a 303-residue protein sequence, read N- to C-terminus: Glycine--tRNA ligase alpha subunit (303 aa).

The protein belongs to the class-II aminoacyl-tRNA synthetase family. As to quaternary structure, tetramer of two alpha and two beta subunits.

The protein resides in the cytoplasm. The enzyme catalyses tRNA(Gly) + glycine + ATP = glycyl-tRNA(Gly) + AMP + diphosphate. The protein is Glycine--tRNA ligase alpha subunit of Klebsiella pneumoniae (strain 342).